The primary structure comprises 344 residues: Oxygen sensor histidine kinase NreB (344 aa).

[4Fe-4S] cluster is bound by residues Cys-58, Cys-61, Cys-73, and Cys-76. Residues Glu-147–Ile-344 enclose the Histidine kinase domain. Position 158 is a phosphohistidine; by autocatalysis (His-158).

Requires [4Fe-4S] cluster as cofactor. Autophosphorylated.

It localises to the cytoplasm. It catalyses the reaction ATP + protein L-histidine = ADP + protein N-phospho-L-histidine.. Member of the two-component regulatory system NreB/NreC involved in the control of dissimilatory nitrate/nitrite reduction in response to oxygen. NreB functions as a direct oxygen sensor histidine kinase which is autophosphorylated, in the absence of oxygen, probably at the conserved histidine residue, and transfers its phosphate group probably to a conserved aspartate residue of NreC. NreB/NreC activates the expression of the nitrate (narGHJI) and nitrite (nir) reductase operons, as well as the putative nitrate transporter gene narT. The protein is Oxygen sensor histidine kinase NreB (nreB) of Staphylococcus epidermidis (strain ATCC 35984 / DSM 28319 / BCRC 17069 / CCUG 31568 / BM 3577 / RP62A).